A 464-amino-acid polypeptide reads, in one-letter code: Na(+)/H(+) antiporter NhaA (464 aa).

A run of 12 helical transmembrane segments spans residues 37-57 (GSGI…NTSC), 82-102 (IHYW…GLEI), 118-138 (VLPI…YFSF), 145-165 (VSGW…ILLL), 176-196 (AVLV…IAIF), 200-220 (NLAW…LLLN), 226-246 (ALWA…FSGV), 248-268 (ATVA…YSPT), 321-341 (ILNT…NAGV), 360-380 (VFFG…MICV), 396-416 (VLGI…VSEL), and 430-450 (ITIL…LRFI).

It belongs to the NhaA Na(+)/H(+) (TC 2.A.33) antiporter family.

It localises to the cell inner membrane. The enzyme catalyses Na(+)(in) + 2 H(+)(out) = Na(+)(out) + 2 H(+)(in). Na(+)/H(+) antiporter that extrudes sodium in exchange for external protons. The polypeptide is Na(+)/H(+) antiporter NhaA (Dichelobacter nodosus (strain VCS1703A)).